The chain runs to 498 residues: Aspartyl/glutamyl-tRNA(Asn/Gln) amidotransferase subunit B (498 aa).

This sequence belongs to the GatB/GatE family. GatB subfamily. In terms of assembly, heterotrimer of A, B and C subunits.

It catalyses the reaction L-glutamyl-tRNA(Gln) + L-glutamine + ATP + H2O = L-glutaminyl-tRNA(Gln) + L-glutamate + ADP + phosphate + H(+). The catalysed reaction is L-aspartyl-tRNA(Asn) + L-glutamine + ATP + H2O = L-asparaginyl-tRNA(Asn) + L-glutamate + ADP + phosphate + 2 H(+). Its function is as follows. Allows the formation of correctly charged Asn-tRNA(Asn) or Gln-tRNA(Gln) through the transamidation of misacylated Asp-tRNA(Asn) or Glu-tRNA(Gln) in organisms which lack either or both of asparaginyl-tRNA or glutaminyl-tRNA synthetases. The reaction takes place in the presence of glutamine and ATP through an activated phospho-Asp-tRNA(Asn) or phospho-Glu-tRNA(Gln). The protein is Aspartyl/glutamyl-tRNA(Asn/Gln) amidotransferase subunit B of Erythrobacter litoralis (strain HTCC2594).